Here is a 206-residue protein sequence, read N- to C-terminus: dCTP deaminase, dUMP-forming (206 aa).

Residues arginine 117–arginine 122, aspartate 135, threonine 143–glutamate 145, glutamine 163, tyrosine 177, lysine 184, and glutamine 188 each bind dCTP. Glutamate 145 serves as the catalytic Proton donor/acceptor.

It belongs to the dCTP deaminase family. In terms of assembly, homotrimer.

The catalysed reaction is dCTP + 2 H2O = dUMP + NH4(+) + diphosphate. Its pathway is pyrimidine metabolism; dUMP biosynthesis; dUMP from dCTP: step 1/1. Functionally, bifunctional enzyme that catalyzes both the deamination of dCTP to dUTP and the hydrolysis of dUTP to dUMP without releasing the toxic dUTP intermediate. In Methanococcus maripaludis (strain C7 / ATCC BAA-1331), this protein is dCTP deaminase, dUMP-forming.